A 308-amino-acid polypeptide reads, in one-letter code: Ribosomal RNA large subunit methyltransferase F (308 aa).

Belongs to the methyltransferase superfamily. METTL16/RlmF family.

Its subcellular location is the cytoplasm. It catalyses the reaction adenosine(1618) in 23S rRNA + S-adenosyl-L-methionine = N(6)-methyladenosine(1618) in 23S rRNA + S-adenosyl-L-homocysteine + H(+). Its function is as follows. Specifically methylates the adenine in position 1618 of 23S rRNA. This chain is Ribosomal RNA large subunit methyltransferase F, found in Escherichia fergusonii (strain ATCC 35469 / DSM 13698 / CCUG 18766 / IAM 14443 / JCM 21226 / LMG 7866 / NBRC 102419 / NCTC 12128 / CDC 0568-73).